A 488-amino-acid polypeptide reads, in one-letter code: N-acyl-D-glutamate deacylase (488 aa).

This sequence belongs to the metallo-dependent hydrolases superfamily. N-acyl-D-amino-acid deacylase family. Requires Zn(2+) as cofactor.

It is found in the cytoplasm. It catalyses the reaction an N-acyl-D-glutamate + H2O = D-glutamate + a carboxylate. Inhibited by cobalt, copper and EDTA. This chain is N-acyl-D-glutamate deacylase, found in Alcaligenes xylosoxydans xylosoxydans (Achromobacter xylosoxidans).